Consider the following 622-residue polypeptide: Threonine--tRNA ligase (622 aa).

Residues 1–141 (MKTLLIHSDY…SRKITTERKE (141 aa)) form an editing domain region. The tract at residues 199–498 (PHVKYIKEKE…TLENRPPALP (300 aa)) is catalytic. The Zn(2+) site is built by cysteine 291, histidine 343, and histidine 467.

It belongs to the class-II aminoacyl-tRNA synthetase family. As to quaternary structure, homodimer. Zn(2+) serves as cofactor.

It localises to the cytoplasm. It carries out the reaction tRNA(Thr) + L-threonine + ATP = L-threonyl-tRNA(Thr) + AMP + diphosphate + H(+). Catalyzes the attachment of threonine to tRNA(Thr) in a two-step reaction: L-threonine is first activated by ATP to form Thr-AMP and then transferred to the acceptor end of tRNA(Thr). Also edits incorrectly charged L-seryl-tRNA(Thr). The chain is Threonine--tRNA ligase from Methanococcus maripaludis (strain C6 / ATCC BAA-1332).